A 224-amino-acid polypeptide reads, in one-letter code: Pleckstrin homology domain-containing family B member 2 (224 aa).

One can recognise a PH domain in the interval 2–109 (AFVKSGWLLR…WKIALQDART (108 aa)). Lysine 20 contacts a 1,2-diacyl-sn-glycero-3-phospho-L-serine.

It localises to the recycling endosome membrane. Its function is as follows. Involved in retrograde transport of recycling endosomes. In Gallus gallus (Chicken), this protein is Pleckstrin homology domain-containing family B member 2 (PLEKHB2).